Reading from the N-terminus, the 148-residue chain is UPF0260 protein Spro_2751 (148 aa).

It belongs to the UPF0260 family.

The polypeptide is UPF0260 protein Spro_2751 (Serratia proteamaculans (strain 568)).